The chain runs to 255 residues: 4-hydroxy-tetrahydrodipicolinate reductase (255 aa).

Residues Gly9–Met14, Gly89–Thr91, and Ala115–Phe118 contribute to the NAD(+) site. His145 acts as the Proton donor/acceptor in catalysis. His146 is a (S)-2,3,4,5-tetrahydrodipicolinate binding site. Lys149 serves as the catalytic Proton donor. Gly155–Thr156 is a binding site for (S)-2,3,4,5-tetrahydrodipicolinate.

It belongs to the DapB family.

Its subcellular location is the cytoplasm. It carries out the reaction (S)-2,3,4,5-tetrahydrodipicolinate + NAD(+) + H2O = (2S,4S)-4-hydroxy-2,3,4,5-tetrahydrodipicolinate + NADH + H(+). It catalyses the reaction (S)-2,3,4,5-tetrahydrodipicolinate + NADP(+) + H2O = (2S,4S)-4-hydroxy-2,3,4,5-tetrahydrodipicolinate + NADPH + H(+). It participates in amino-acid biosynthesis; L-lysine biosynthesis via DAP pathway; (S)-tetrahydrodipicolinate from L-aspartate: step 4/4. Functionally, catalyzes the conversion of 4-hydroxy-tetrahydrodipicolinate (HTPA) to tetrahydrodipicolinate. In Streptococcus gordonii (strain Challis / ATCC 35105 / BCRC 15272 / CH1 / DL1 / V288), this protein is 4-hydroxy-tetrahydrodipicolinate reductase.